The chain runs to 238 residues: Isoamyl acetate-hydrolyzing esterase (238 aa).

Ser12 acts as the Nucleophile in catalysis. Asp187 functions as the Proton donor in the catalytic mechanism. The Proton acceptor role is filled by His190.

This sequence belongs to the 'GDSL' lipolytic enzyme family. IAH1 subfamily. In terms of assembly, homodimer.

It carries out the reaction 3-methylbutyl acetate + H2O = 3-methylbutanol + acetate + H(+). Its function is as follows. Plays a crucial role in the hydrolysis of isoamyl acetate in sake mash. Hydrolyzes short chain esters from acetate (C2) to hexanoate (C6), showing more specificity for shorter chain exters. No activity for decanoate (C10) esters. The polypeptide is Isoamyl acetate-hydrolyzing esterase (Saccharomyces cerevisiae (strain ATCC 204508 / S288c) (Baker's yeast)).